The primary structure comprises 223 residues: Phosphoenolpyruvate guanylyltransferase (223 aa).

Phosphoenolpyruvate-binding residues include Thr140, Gly156, and Ser159.

Belongs to the CofC family.

The catalysed reaction is phosphoenolpyruvate + GTP + H(+) = enolpyruvoyl-2-diphospho-5'-guanosine + diphosphate. It participates in cofactor biosynthesis; coenzyme F420 biosynthesis. Its function is as follows. Guanylyltransferase that catalyzes the activation of phosphoenolpyruvate (PEP) as enolpyruvoyl-2-diphospho-5'-guanosine, via the condensation of PEP with GTP. It is involved in the biosynthesis of coenzyme F420, a hydride carrier cofactor. This Conexibacter woesei (strain DSM 14684 / CCUG 47730 / CIP 108061 / JCM 11494 / NBRC 100937 / ID131577) protein is Phosphoenolpyruvate guanylyltransferase.